A 361-amino-acid chain; its full sequence is Serine/threonine-protein kinase SAPK9 (361 aa).

In terms of domain architecture, Protein kinase spans 22–278; it reads YELVKEIGSG…MPEIKNHPWF (257 aa). ATP is bound by residues 28–36 and Lys51; that span reads IGSGNFGVA. The Proton acceptor role is filled by Asp141.

The protein belongs to the protein kinase superfamily. Ser/Thr protein kinase family. Interacts with BZIP46. Post-translationally, may be phosphorylated. In terms of tissue distribution, expressed in leaf sheaths and roots. Expressed in shoots of young seedlings.

The protein localises to the cytoplasm. It is found in the nucleus. It catalyses the reaction L-seryl-[protein] + ATP = O-phospho-L-seryl-[protein] + ADP + H(+). The catalysed reaction is L-threonyl-[protein] + ATP = O-phospho-L-threonyl-[protein] + ADP + H(+). Its activity is regulated as follows. Activated by hyperosmotic stress and abscisic acid (ABA). Its function is as follows. May play a role in signal transduction of hyperosmotic response. Can phosphorylate BZIP46 in vitro. This chain is Serine/threonine-protein kinase SAPK9 (SAPK9), found in Oryza sativa subsp. japonica (Rice).